Consider the following 609-residue polypeptide: Putative 4-coumarate--CoA ligase-like 8 (609 aa).

Positions 194, 195, 196, 197, 198, and 202 each coordinate ATP. Residues F252 and S256 each coordinate (E)-4-coumaroyl-AMP. R274 lines the CoA pocket. Positions 276 to 348 are SBD1; it reads SVEKTMAAVE…SCFPAVNLGQ (73 aa). Positions 326, 348, 353, and 361 each coordinate (E)-4-coumaroyl-AMP. 2 residues coordinate ATP: Q348 and T353. An SBD2 region spans residues 349–450; sequence CYGLTETTGI…VRGPSTMRGY (102 aa). The ATP site is built by D482 and R497. The (E)-4-coumaroyl-AMP site is built by K499 and K503. Residue A506 participates in CoA binding. K589 lines the ATP pocket.

Belongs to the ATP-dependent AMP-binding enzyme family. It depends on Mg(2+) as a cofactor.

The enzyme catalyses (E)-4-coumarate + ATP + CoA = (E)-4-coumaroyl-CoA + AMP + diphosphate. The catalysed reaction is (E)-4-coumarate + ATP + H(+) = (E)-4-coumaroyl-AMP + diphosphate. It catalyses the reaction (E)-4-coumaroyl-AMP + CoA = (E)-4-coumaroyl-CoA + AMP + H(+). Its function is as follows. Carboxylate--CoA ligase that may use 4-coumarate as substrate. Follows a two-step reaction mechanism, wherein the carboxylate substrate first undergoes adenylation by ATP, followed by a thioesterification in the presence of CoA to yield the final CoA thioester. The sequence is that of Putative 4-coumarate--CoA ligase-like 8 (4CLL8) from Oryza sativa subsp. japonica (Rice).